The chain runs to 617 residues: Protein 4.1 (617 aa).

The region spanning Met1 to Ser282 is the FERM domain. Tyr13 is subject to Phosphotyrosine. At Thr169 the chain carries Phosphothreonine. Residues Thr308 to Lys401 form a disordered region. Phosphoserine occurs at positions 312, 331, and 333. A compositionally biased stretch (low complexity) spans Arg348 to Ala361. Over residues Ala387–Pro396 the composition is skewed to acidic residues. Residues Lys401–Pro466 are spectrin--actin-binding. At Tyr413 the chain carries Phosphotyrosine; by EGFR. Ser417, Ser427, Ser437, and Ser462 each carry phosphoserine. Phosphoserine; by CDK1 is present on Ser465. Residues Phe467–Glu617 are C-terminal (CTD). Thr489 and Thr612 each carry phosphothreonine.

As to quaternary structure, binds with a high affinity to glycophorin and with lower affinity to band III protein. Associates with the nuclear mitotic apparatus. Binds calmodulin, CPAP and DLG1. Also found to associate with contractile apparatus and tight junctions. Interacts with NUMA1; this interaction is negatively regulated by CDK1 during metaphase and promotes anaphase-specific localization of NUMA1 in symmetrically dividing cells. Interacts with ATP2B1; regulates small intestinal calcium absorption through regulation of membrane expression of ATP2B1. Post-translationally, phosphorylated at multiple sites by different protein kinases and each phosphorylation event selectively modulates the protein's functions. Phosphorylation on Tyr-413 reduces the ability of 4.1 to promote the assembly of the spectrin/actin/4.1 ternary complex.

Its subcellular location is the nucleus. The protein resides in the cytoplasm. The protein localises to the cytoskeleton. It is found in the cell cortex. In terms of biological role, protein 4.1 is a major structural element of the erythrocyte membrane skeleton. It plays a key role in regulating membrane physical properties of mechanical stability and deformability by stabilizing spectrin-actin interaction. Recruits DLG1 to membranes. Required for dynein-dynactin complex and NUMA1 recruitment at the mitotic cell cortex during anaphase. The polypeptide is Protein 4.1 (Bos taurus (Bovine)).